The chain runs to 413 residues: Argininosuccinate synthase (413 aa).

ATP contacts are provided by residues 14 to 22 (AYSGGLDTS) and Ala-41. L-citrulline contacts are provided by Tyr-94 and Ser-99. Gly-124 contributes to the ATP binding site. 3 residues coordinate L-aspartate: Thr-126, Asn-130, and Asp-131. An L-citrulline-binding site is contributed by Asn-130. L-citrulline is bound by residues Arg-134, Ser-185, Ser-194, Glu-270, and Tyr-282.

This sequence belongs to the argininosuccinate synthase family. Type 1 subfamily. Homotetramer.

The protein localises to the cytoplasm. It carries out the reaction L-citrulline + L-aspartate + ATP = 2-(N(omega)-L-arginino)succinate + AMP + diphosphate + H(+). Its pathway is amino-acid biosynthesis; L-arginine biosynthesis; L-arginine from L-ornithine and carbamoyl phosphate: step 2/3. The chain is Argininosuccinate synthase from Hyphomonas neptunium (strain ATCC 15444).